A 283-amino-acid polypeptide reads, in one-letter code: Cuticle collagen 49 (283 aa).

The signal sequence occupies residues 1-19 (MWKFVIGSVSTAAFFVSVC). Residues 90 to 283 (EPTKNCPAGP…GYCTCPPRTA (194 aa)) form a disordered region. A compositionally biased stretch (basic and acidic residues) spans 127 to 139 (VVIHDMPNPKECI). Residues 143 to 155 (AGPPGPPGPPGPL) show a composition bias toward pro residues. Residues 185–204 (QGPPGSAGRAGPRGQAGQPG) show a composition bias toward low complexity. The Collagen-like domain maps to 213-271 (GRPGPQGPLGEPGAQGEPGVDGKDGALGAPGRKAENGRPGKRGKDGVAGVPGTRGKEGE). The span at 244–257 (RKAENGRPGKRGKD) shows a compositional bias: basic and acidic residues.

This sequence belongs to the cuticular collagen family. As to quaternary structure, collagen polypeptide chains are complexed within the cuticle by disulfide bonds and other types of covalent cross-links.

Its function is as follows. Probable cuticular collagen-like protein. Nematode cuticles are composed largely of collagen-like proteins. The cuticle functions both as an exoskeleton and as a barrier to protect the worm from its environment. Acts downstream of the Wnt signaling pathway, perhaps in the formation of the adult cuticle. This is Cuticle collagen 49 from Caenorhabditis elegans.